We begin with the raw amino-acid sequence, 288 residues long: Probable endonuclease 4 (288 aa).

Zn(2+) contacts are provided by histidine 75, histidine 115, glutamate 153, aspartate 187, histidine 190, histidine 224, aspartate 237, histidine 239, and glutamate 269.

This sequence belongs to the AP endonuclease 2 family. Zn(2+) serves as cofactor.

It catalyses the reaction Endonucleolytic cleavage to 5'-phosphooligonucleotide end-products.. In terms of biological role, endonuclease IV plays a role in DNA repair. It cleaves phosphodiester bonds at apurinic or apyrimidinic (AP) sites, generating a 3'-hydroxyl group and a 5'-terminal sugar phosphate. This is Probable endonuclease 4 from Chlamydia trachomatis serovar L2 (strain ATCC VR-902B / DSM 19102 / 434/Bu).